Here is a 111-residue protein sequence, read N- to C-terminus: Large ribosomal subunit protein uL22 (111 aa).

It belongs to the universal ribosomal protein uL22 family. Part of the 50S ribosomal subunit.

Functionally, this protein binds specifically to 23S rRNA; its binding is stimulated by other ribosomal proteins, e.g. L4, L17, and L20. It is important during the early stages of 50S assembly. It makes multiple contacts with different domains of the 23S rRNA in the assembled 50S subunit and ribosome. The globular domain of the protein is located near the polypeptide exit tunnel on the outside of the subunit, while an extended beta-hairpin is found that lines the wall of the exit tunnel in the center of the 70S ribosome. This is Large ribosomal subunit protein uL22 from Chlamydia trachomatis serovar A (strain ATCC VR-571B / DSM 19440 / HAR-13).